A 413-amino-acid chain; its full sequence is Alpha-1-antitrypsin 1-2 (413 aa).

The N-terminal stretch at 1-24 is a signal peptide; the sequence is MTPSISWGLLLLAGLCCMVPSFLA. 3 N-linked (GlcNAc...) asparagine glycosylation sites follow: asparagine 64, asparagine 101, and asparagine 265. The tract at residues 368–387 is RCL; the sequence is AATVFEAVPMSMPPILRFDH.

It belongs to the serpin family.

The protein localises to the secreted. Its function is as follows. Inhibitor of serine proteases. Its primary target is elastase, but it also has a moderate affinity for plasmin and thrombin. This Mus musculus (Mouse) protein is Alpha-1-antitrypsin 1-2 (Serpina1b).